A 245-amino-acid polypeptide reads, in one-letter code: Thiopurine S-methyltransferase (245 aa).

An S-adenosyl-L-methionine-binding site is contributed by Trp-29–Phe-40. Phe-40 lines the substrate pocket. Residue Lys-58 is modified to N6-acetyllysine. Positions 69, 90, and 152 each coordinate S-adenosyl-L-methionine.

It belongs to the class I-like SAM-binding methyltransferase superfamily. TPMT family. Monomer.

The protein resides in the cytoplasm. It carries out the reaction S-adenosyl-L-methionine + a thiopurine = S-adenosyl-L-homocysteine + a thiopurine S-methylether.. This is Thiopurine S-methyltransferase (TPMT) from Felis catus (Cat).